A 243-amino-acid chain; its full sequence is Octanoyltransferase (243 aa).

The BPL/LPL catalytic domain occupies 49-227 (PLAPQAVWLL…SLSDRFGLVW (179 aa)). Residues 91-98 (RGGEVTHH), 158-160 (AIG), and 171-173 (GLA) each bind substrate. Cysteine 189 acts as the Acyl-thioester intermediate in catalysis.

Belongs to the LipB family.

The protein localises to the cytoplasm. It carries out the reaction octanoyl-[ACP] + L-lysyl-[protein] = N(6)-octanoyl-L-lysyl-[protein] + holo-[ACP] + H(+). It participates in protein modification; protein lipoylation via endogenous pathway; protein N(6)-(lipoyl)lysine from octanoyl-[acyl-carrier-protein]: step 1/2. Functionally, catalyzes the transfer of endogenously produced octanoic acid from octanoyl-acyl-carrier-protein onto the lipoyl domains of lipoate-dependent enzymes. Lipoyl-ACP can also act as a substrate although octanoyl-ACP is likely to be the physiological substrate. This is Octanoyltransferase from Prochlorococcus marinus (strain MIT 9313).